A 378-amino-acid chain; its full sequence is Chaperone protein DnaJ (378 aa).

Residues 5-69 (EFYDRLGVSK…QKRAAYDQYG (65 aa)) enclose the J domain. A CR-type zinc finger spans residues 135-217 (GTEKEVKYHR…CHGTGHEKQA (83 aa)). Zn(2+)-binding residues include Cys-148, Cys-151, Cys-165, Cys-168, Cys-191, Cys-194, Cys-205, and Cys-208. CXXCXGXG motif repeat units lie at residues 148 to 155 (CRTCNGSG), 165 to 172 (CGRCHGAG), 191 to 198 (CDVCHGRG), and 205 to 212 (CTTCHGTG).

This sequence belongs to the DnaJ family. Homodimer. The cofactor is Zn(2+).

It localises to the cytoplasm. Its function is as follows. Participates actively in the response to hyperosmotic and heat shock by preventing the aggregation of stress-denatured proteins and by disaggregating proteins, also in an autonomous, DnaK-independent fashion. Unfolded proteins bind initially to DnaJ; upon interaction with the DnaJ-bound protein, DnaK hydrolyzes its bound ATP, resulting in the formation of a stable complex. GrpE releases ADP from DnaK; ATP binding to DnaK triggers the release of the substrate protein, thus completing the reaction cycle. Several rounds of ATP-dependent interactions between DnaJ, DnaK and GrpE are required for fully efficient folding. Also involved, together with DnaK and GrpE, in the DNA replication of plasmids through activation of initiation proteins. The protein is Chaperone protein DnaJ of Streptococcus pneumoniae serotype 4 (strain ATCC BAA-334 / TIGR4).